A 247-amino-acid polypeptide reads, in one-letter code: MTSPAQRHMMRVSAAMTAQREAAPLRHATVYEQMLVKLAADQRTLKAIYSKELKAAKKRELLPFWLPWVNGVLELGKGAQDDILMTVMLWRLDTGDIAGALEIARYALKYGLTMPGKHRRTPPYMFTEEVALAAMRAHAAGESVDTRLLTETLELTATADMPDEVRAKLHKITGLFLRDGGDAAGALAHLQRATQLDCQAGVKKEIERLERELKPKPEPQPKAATRAPRKTRSVTPAKRGRPKKKAS.

Over residues 209–219 (LERELKPKPEP) the composition is skewed to basic and acidic residues. Positions 209 to 247 (LERELKPKPEPQPKAATRAPRKTRSVTPAKRGRPKKKAS) are disordered. A DNA-binding region spans residues 214 to 245 (KPKPEPQPKAATRAPRKTRSVTPAKRGRPKKK). Basic residues predominate over residues 227–247 (APRKTRSVTPAKRGRPKKKAS).

The protein to phage HP1 protein ORF19.

M protein is probably an endonuclease which directs cos cleavage. The Q, P and M proteins are needed to package DNA into proheads and for the conversion of proheads to capsids. The sequence is that of Terminase, endonuclease subunit (M) from Escherichia phage P2 (Bacteriophage P2).